Reading from the N-terminus, the 375-residue chain is MQKLAVYVYIYLFVQISVDPVALDGSSQPTENTEKDGLCNACTWRQNTKSSRIEAIKIQILSKLRLEQAPNISRDVIKQLLPKAPPLQELIDQYDVQRDDSSDGSLEDDDYHATTETIITMPTESDFLVQMEGKPKCCFFKFSSKIQYNKVVKAQLWIYLRQVQKPTTVFVQILRLIKPMKDGTRYTGIRSLKLDMNPGNGIWQSIDVKTVLQNWLKQPESNLGIEIKAFDENGRDLAVTFPGPGEDGSNPFLEVRVTDTPKRSRRDFGLDCDEHSTESRCCRYPLTVDFEAFGWDWIIAPKRYKANYCSGECEFVFLQKYPHTHLVHQANPRGSAGPCCTPTKMSPINMLYFNGKEQIIYGKIPAMVVDRCGCS.

A signal peptide spans 1-23 (MQKLAVYVYIYLFVQISVDPVAL). A propeptide spanning residues 24–266 (DGSSQPTENT…VTDTPKRSRR (243 aa)) is cleaved from the precursor. N-linked (GlcNAc...) asparagine glycosylation is present at asparagine 71. 4 disulfide bridges follow: cysteine 272-cysteine 282, cysteine 281-cysteine 340, cysteine 309-cysteine 372, and cysteine 313-cysteine 374.

It belongs to the TGF-beta family. In terms of assembly, homodimer; disulfide-linked.

The protein resides in the secreted. In terms of biological role, acts specifically as a negative regulator of skeletal muscle growth. The polypeptide is Growth/differentiation factor 8 (MSTN) (Excalfactoria chinensis (Blue-breasted quail)).